Consider the following 572-residue polypeptide: Fatty acid amide hydrolase 1 (572 aa).

Residues 1-14 (MIFYLVLLVLGAIA) form the signal peptide. The stretch at 32–63 (IVAQRRRDDLSKNVEQARKAADKLDTQRRDWI) forms a coiled coil. Residues Lys139 and Ser214 each act as charge relay system in the active site. Substrate is bound by residues Ser214 and 235 to 238 (VGGS). Ser238 serves as the catalytic Acyl-ester intermediate.

This sequence belongs to the amidase family. Expressed in the pharynx, some pharyngeal neurons, the posterior intestine and anal depressor muscles.

The catalysed reaction is N-(5Z,8Z,11Z,14Z-eicosatetraenoyl)-ethanolamine + H2O = ethanolamine + (5Z,8Z,11Z,14Z)-eicosatetraenoate. It catalyses the reaction (9Z)-octadecenamide + H2O = (9Z)-octadecenoate + NH4(+). It carries out the reaction (5Z,8Z,11Z,14Z,17Z-eicosapentaenoyl) ethanolamine + H2O = (5Z,8Z,11Z,14Z,17Z)-eicosapentaenoate + ethanolamine. The enzyme catalyses N-(9Z-hexadecenoyl) ethanolamine + H2O = (9Z)-hexadecenoate + ethanolamine. The catalysed reaction is N-(9Z-octadecenoyl) ethanolamine + H2O = ethanolamine + (9Z)-octadecenoate. It catalyses the reaction N-octadecanoyl ethanolamine + H2O = octadecanoate + ethanolamine. It carries out the reaction N-docosanoyl-ethanolamine + H2O = docosanoate + ethanolamine. The enzyme catalyses N-(15Z-tetracosenoyl)-ethanolamine + H2O = (15Z)-tetracosenoate + ethanolamine. The catalysed reaction is N-hexadecanoylethanolamine + H2O = ethanolamine + hexadecanoate. It catalyses the reaction N-(9Z,12Z-octadecadienoyl)-ethanolamine + H2O = ethanolamine + (9Z,12Z)-octadecadienoate. It carries out the reaction (9Z)-octadecenoate + glycine = N-(9Z-octadecenoyl)glycine + H2O. The enzyme catalyses N-(5Z,8Z,11Z,14Z)-eicosatetraenoyl-glycine + H2O = (5Z,8Z,11Z,14Z)-eicosatetraenoate + glycine. The catalysed reaction is N-(5Z,8Z,11Z,14Z-eicosatetraenoyl)-L-serine + H2O = (5Z,8Z,11Z,14Z)-eicosatetraenoate + L-serine. Catalyzes the hydrolysis of endogenous amidated lipids like anandamide (AEA or N-(5Z,8Z,11Z,14Z-eicosatetraenoyl)-ethanolamine) and eicosapentaneoyl ethanolamide (EPEA or (5Z,8Z,11Z,14Z,17Z-eicosapentaenoyl) ethanolamine), as well as other fatty amides, to their corresponding fatty acids, thereby regulating the signaling functions of these molecules. EPEA promotes dauer formation and may constitute a signal of high nutrient availability. Breakdown of EPEA may promote lifespan extension when nutrient availability is high. Facilitates axon regeneration after injury by degradating inhibitory compounds such as AEA. FAAH cooperates with PM20D1 in the hydrolysis of amino acid-conjugated fatty acids such as N-fatty acyl glycine and N-fatty acyl-L-serine, thereby acting as a physiological regulator of specific subsets of intracellular, but not of extracellular, N-fatty acyl amino acids. The sequence is that of Fatty acid amide hydrolase 1 from Caenorhabditis elegans.